A 179-amino-acid chain; its full sequence is Cell division protein SepF (179 aa).

Residues Asp19 to Lys55 form a disordered region. Polar residues predominate over residues Thr33–Lys55.

It belongs to the SepF family. In terms of assembly, homodimer. Interacts with FtsZ.

The protein resides in the cytoplasm. Its function is as follows. Cell division protein that is part of the divisome complex and is recruited early to the Z-ring. Probably stimulates Z-ring formation, perhaps through the cross-linking of FtsZ protofilaments. Its function overlaps with FtsA. In Streptococcus pneumoniae (strain JJA), this protein is Cell division protein SepF.